We begin with the raw amino-acid sequence, 229 residues long: Ribosomal RNA large subunit methyltransferase E (229 aa).

The segment at 1-20 (MSRAGNGGRQRIKTAKGRSA) is disordered. S-adenosyl-L-methionine-binding residues include G75, W77, D94, D110, and D134. The active-site Proton acceptor is K174.

Belongs to the class I-like SAM-binding methyltransferase superfamily. RNA methyltransferase RlmE family.

It is found in the cytoplasm. The enzyme catalyses uridine(2552) in 23S rRNA + S-adenosyl-L-methionine = 2'-O-methyluridine(2552) in 23S rRNA + S-adenosyl-L-homocysteine + H(+). Its function is as follows. Specifically methylates the uridine in position 2552 of 23S rRNA at the 2'-O position of the ribose in the fully assembled 50S ribosomal subunit. In Rhizorhabdus wittichii (strain DSM 6014 / CCUG 31198 / JCM 15750 / NBRC 105917 / EY 4224 / RW1) (Sphingomonas wittichii), this protein is Ribosomal RNA large subunit methyltransferase E.